The primary structure comprises 535 residues: Probable lipid II flippase MurJ (535 aa).

12 consecutive transmembrane segments (helical) span residues 90–110, 131–151, 159–179, 192–212, 233–253, 274–294, 316–336, 350–370, 388–408, 413–433, 451–471, and 484–504; these read VLFT…PFIV, FATI…MAGM, FAAA…LAYA, DLSW…WVAV, LLVL…NLLI, IYQL…LPEL, FTLF…EPIV, TVVV…FVLI, IFAG…FPSL, IATA…ATLV, LVIA…WLAF, and LTLC…AFGI.

The protein belongs to the MurJ/MviN family.

The protein resides in the cell inner membrane. It participates in cell wall biogenesis; peptidoglycan biosynthesis. Its function is as follows. Involved in peptidoglycan biosynthesis. Transports lipid-linked peptidoglycan precursors from the inner to the outer leaflet of the cytoplasmic membrane. The protein is Probable lipid II flippase MurJ of Rhizobium meliloti (strain 1021) (Ensifer meliloti).